The sequence spans 138 residues: Large ribosomal subunit protein uL16 (138 aa).

The protein belongs to the universal ribosomal protein uL16 family. Part of the 50S ribosomal subunit.

Its function is as follows. Binds 23S rRNA and is also seen to make contacts with the A and possibly P site tRNAs. This chain is Large ribosomal subunit protein uL16, found in Anaeromyxobacter dehalogenans (strain 2CP-1 / ATCC BAA-258).